Reading from the N-terminus, the 1746-residue chain is Inactive tyrosine-protein kinase PEAK1 (1746 aa).

The interval 44 to 66 (KTNANHSNNHRIRNTGNFRPPVA) is disordered. Residue serine 281 is modified to Phosphoserine. Disordered regions lie at residues 334–411 (QSMV…KVPE) and 489–517 (LEGP…LTPG). A compositionally biased stretch (low complexity) spans 338–349 (SSDSTSPDSSLT). Polar residues predominate over residues 355–364 (ETASSLSQKI). The span at 492–513 (PVNSPKTKSSSSTPNSPVTSSS) shows a compositional bias: low complexity. Serine 540, serine 572, and serine 587 each carry phosphoserine. The interval 551–577 (ITSGTGPNVPPRKNCHKSAPTSPTATN) is disordered. Residues tyrosine 635 and tyrosine 641 each carry the phosphotyrosine modification. Serine 648 is subject to Phosphoserine. The residue at position 665 (tyrosine 665) is a Phosphotyrosine. Disordered stretches follow at residues 671–700 (ESKV…HKRG), 713–764 (LNRG…EKAS), 802–920 (DADV…AADA), 1052–1102 (VTED…DPNP), and 1138–1158 (GKTD…LPKK). Residues 675-694 (PDNTTSKTTDCLQTKGFSNS) show a composition bias toward polar residues. Residues 718–730 (SSPQRSYSSSHSS) show a composition bias toward low complexity. Composition is skewed to polar residues over residues 748–758 (TQESQMVGSSS) and 820–841 (LFTS…PTTK). Residues serine 826 and serine 854 each carry the phosphoserine modification. Residues 864–874 (SEPPAPFPPPR) show a composition bias toward pro residues. A compositionally biased stretch (polar residues) spans 889 to 902 (HFTNWTKPTSPTRS). Serine 898 carries the post-translational modification Phosphoserine. Basic and acidic residues-rich tracts occupy residues 903–920 (TEAE…AADA), 1052–1062 (VTEDFSPRDPR), and 1084–1094 (ELEREDGKEDI). The residue at position 1151 (threonine 1151) is a Phosphothreonine. Tyrosine 1188 carries the post-translational modification Phosphotyrosine. The segment at 1285 to 1311 (EVVGKIRSLHTDALKKLAVKCEDLFMA) is required for homodimerization. Residues 1313–1675 (QKDQLRFGVD…LLWGPREDLF (363 aa)) enclose the Protein kinase domain. Serine 1374 is modified (phosphoserine). The disordered stretch occupies residues 1402 to 1456 (LLPWEDPDDPEKDEDDMEETEEDAKGETDGKNPKPCSEAASSQKENQGVMSKKQR). Acidic residues predominate over residues 1406 to 1423 (EDPDDPEKDEDDMEETEE). A compositionally biased stretch (basic and acidic residues) spans 1424–1433 (DAKGETDGKN). A compositionally biased stretch (polar residues) spans 1440–1450 (AASSQKENQGV). The required for homodimerization stretch occupies residues 1670–1743 (PREDLFQTFT…DSLSCIVKIL (74 aa)).

Belongs to the protein kinase superfamily. In terms of assembly, homodimer. Interacts with BCAR1 and CRK. Interacts with PRAG1. Interacts (when phosphorylated at Tyr-1188) with SHC1 (via PID domain). Found in a complex with PPP1CA, PPP1CC, SHC1 and PEAK1. Interacts (when phosphorylated at Tyr-635) with tensin TNS3 (when phosphorylated on the SH2 domain); TNS3 also interacts with integrins ITGB1, ITGB3 and ITGB5 and mediates their association with PEAK1. Interacts with RASAL2 and GRB2. Post-translationally, phosphorylated on tyrosine in a CSK-dependent manner in response to adhesion to fibronectin and to EGF stimulation. Phosphorylation at Tyr-665 by a Src family kinase controls subcellular localization to focal adhesion and focal adhesion dynamics. Phosphorylation at Tyr-1188 is essential for binding to SHC1. Phosphorylation at Tyr-635 promotes interaction with tensin TNS3.

The protein localises to the cytoplasm. It localises to the cytoskeleton. The protein resides in the cell junction. Its subcellular location is the focal adhesion. In terms of biological role, probable catalytically inactive kinase. Scaffolding protein that regulates the cytoskeleton to control cell spreading and migration by modulating focal adhesion dynamics. Acts as a scaffold for mediating EGFR signaling. This Homo sapiens (Human) protein is Inactive tyrosine-protein kinase PEAK1 (PEAK1).